Here is a 242-residue protein sequence, read N- to C-terminus: Small ribosomal subunit protein uS2 (242 aa).

It belongs to the universal ribosomal protein uS2 family.

In Shewanella baltica (strain OS223), this protein is Small ribosomal subunit protein uS2.